Here is a 257-residue protein sequence, read N- to C-terminus: Probable septum site-determining protein MinC (257 aa).

Belongs to the MinC family. Interacts with MinD and FtsZ.

Its function is as follows. Cell division inhibitor that blocks the formation of polar Z ring septums. Rapidly oscillates between the poles of the cell to destabilize FtsZ filaments that have formed before they mature into polar Z rings. Prevents FtsZ polymerization. The protein is Probable septum site-determining protein MinC of Burkholderia lata (strain ATCC 17760 / DSM 23089 / LMG 22485 / NCIMB 9086 / R18194 / 383).